A 383-amino-acid polypeptide reads, in one-letter code: Lipid-A-disaccharide synthase (383 aa).

This sequence belongs to the LpxB family.

It catalyses the reaction a lipid X + a UDP-2-N,3-O-bis[(3R)-3-hydroxyacyl]-alpha-D-glucosamine = a lipid A disaccharide + UDP + H(+). Its pathway is bacterial outer membrane biogenesis; LPS lipid A biosynthesis. In terms of biological role, condensation of UDP-2,3-diacylglucosamine and 2,3-diacylglucosamine-1-phosphate to form lipid A disaccharide, a precursor of lipid A, a phosphorylated glycolipid that anchors the lipopolysaccharide to the outer membrane of the cell. The polypeptide is Lipid-A-disaccharide synthase (Anaeromyxobacter sp. (strain K)).